The sequence spans 361 residues: Septin-12 (361 aa).

A Septin-type G domain is found at 45–316 (MGFEFNIMVV…ENYRIIRLKE (272 aa)). An interaction with SEPTIN7 region spans residues 45 to 318 (MGFEFNIMVV…YRIIRLKESH (274 aa)). Positions 55-62 (GQSGLGKS) are G1 motif. GTP contacts are provided by residues 55–62 (GQSGLGKS), T88, G114, 194–202 (RADSLTIEE), G250, and R265. Positions 111-114 (DTPG) are G3 motif. Residues 193 to 196 (ARAD) are G4 motif. The segment at 257 to 361 (VNGRCVLGRK…WAEDNSDEDF (105 aa)) is self-association (via N-terminus) to polymerize octameric septin 12-7-6-2/4-2/4-6-7-12 filaments. The tract at residues 333–361 (PPPAPTGTRASPGPAKMCRWAEDNSDEDF) is disordered. The segment covering 338–347 (TGTRASPGPA) has biased composition (low complexity).

This sequence belongs to the TRAFAC class TrmE-Era-EngA-EngB-Septin-like GTPase superfamily. Septin GTPase family. As to quaternary structure, septins polymerize into heterooligomeric protein complexes that form filaments, and can associate with cellular membranes, actin filaments and microtubules. GTPase activity is required for filament formation. Interacts with SEPTIN6 and SEPTIN11. Component of a octameric complex consisting of SEPTIN12, SEPTIN7, SEPTIN6 and SEPTIN2 or SEPTIN4 in the order 12-7-6-2-2-6-7-12 or 12-7-6-4-4-6-7-12 and located in the sperm annulus; the octamer polymerizes into filaments via the SEPTIN12 N- and C-termini; the SEPTIN12:SEPTIN7 association is mediated by the GTP-binding domains. Interacts with SPAG4 and LMNB1. Associates with alpha- and beta-tubulins.

It localises to the cytoplasm. The protein localises to the cytoskeleton. It is found in the spindle. Its subcellular location is the cell projection. The protein resides in the cilium. It localises to the flagellum. Its function is as follows. Filament-forming cytoskeletal GTPase. May play a role in cytokinesis (Potential). Involved in spermatogenesis. Involved in the morphogenesis of sperm heads and the elongation of sperm tails probably implicating the association with alpha- and beta-tubulins. Forms a filamentous structure with SEPTIN7, SEPTIN6, SEPTIN2 and probably SEPTIN4 at the sperm annulus which is required for the structural integrity and motility of the sperm tail during postmeiotic differentiation. This chain is Septin-12, found in Bos taurus (Bovine).